A 130-amino-acid chain; its full sequence is Small ribosomal subunit protein uS11 (130 aa).

It belongs to the universal ribosomal protein uS11 family. Part of the 30S ribosomal subunit. Interacts with proteins S7 and S18. Binds to IF-3.

Located on the platform of the 30S subunit, it bridges several disparate RNA helices of the 16S rRNA. Forms part of the Shine-Dalgarno cleft in the 70S ribosome. The sequence is that of Small ribosomal subunit protein uS11 from Kosmotoga olearia (strain ATCC BAA-1733 / DSM 21960 / TBF 19.5.1).